The primary structure comprises 552 residues: 4-coumarate--CoA ligase-like 4 (552 aa).

Residues 182–205 (ISATTPDPARRKDRVTQDDPATLL) form a disordered region. Over residues 189-198 (PARRKDRVTQ) the composition is skewed to basic and acidic residues. ATP-binding residues include Ser207, Ser208, Gly209, Thr210, Thr211, and Lys215. A (E)-4-coumaroyl-AMP-binding site is contributed by Tyr256. Residue Lys277 coordinates CoA. The tract at residues 279 to 346 (ELPEMLRSIN…EKYPQVEILQ (68 aa)) is SBD1. Residues Gly324, Gln346, Gly347, and Thr351 each coordinate (E)-4-coumaroyl-AMP. Gln346, Gly347, Thr351, Asp432, and Arg447 together coordinate ATP. The tract at residues 347-411 (GYGLTESTAI…IRGPYVMKGY (65 aa)) is SBD2. Positions 449 and 453 each coordinate (E)-4-coumaroyl-AMP. CoA contacts are provided by Lys455 and Gly456. Position 538 (Lys538) interacts with ATP.

This sequence belongs to the ATP-dependent AMP-binding enzyme family. The cofactor is Mg(2+).

It carries out the reaction (E)-4-coumarate + ATP + CoA = (E)-4-coumaroyl-CoA + AMP + diphosphate. It catalyses the reaction (E)-4-coumarate + ATP + H(+) = (E)-4-coumaroyl-AMP + diphosphate. The enzyme catalyses (E)-4-coumaroyl-AMP + CoA = (E)-4-coumaroyl-CoA + AMP + H(+). Functionally, carboxylate--CoA ligase that may use 4-coumarate as substrate. Follows a two-step reaction mechanism, wherein the carboxylate substrate first undergoes adenylation by ATP, followed by a thioesterification in the presence of CoA to yield the final CoA thioester. In Oryza sativa subsp. japonica (Rice), this protein is 4-coumarate--CoA ligase-like 4 (4CLL4).